Consider the following 279-residue polypeptide: MSAPCHCKHAEELTDTFSSSSLSYTNGKLSVLSPELQAEFQDPNHPANLICELCRLFYDNNWVTGTGGGISIRDVDGPNPNLVYIAPSGVQKERIQPWEMFLVELPDERIIRTPNDIPKELTKSYKYKPSACTPLFISCYTMRDAGACIHTHSQHAVMMTLFLENEKEFSISHIEQIKALPKLKYNEETKKIEKIGSMEYYDKLVIPIIENTPHEEDLTDSLQEAIKNYPGASAVLVRRHGIYVWGETVWKAKVYNEAIDYLLELAVKMKLAGIPLVKE.

C132 contributes to the substrate binding site. Zn(2+) contacts are provided by H150 and H152. The Proton donor/acceptor role is filled by E175. H240 provides a ligand contact to Zn(2+).

It belongs to the aldolase class II family. MtnB subfamily. Requires Zn(2+) as cofactor.

The protein localises to the cytoplasm. It catalyses the reaction 5-(methylsulfanyl)-D-ribulose 1-phosphate = 5-methylsulfanyl-2,3-dioxopentyl phosphate + H2O. It functions in the pathway amino-acid biosynthesis; L-methionine biosynthesis via salvage pathway; L-methionine from S-methyl-5-thio-alpha-D-ribose 1-phosphate: step 2/6. Catalyzes the dehydration of methylthioribulose-1-phosphate (MTRu-1-P) into 2,3-diketo-5-methylthiopentyl-1-phosphate (DK-MTP-1-P). This is Methylthioribulose-1-phosphate dehydratase from Candida tropicalis (strain ATCC MYA-3404 / T1) (Yeast).